The primary structure comprises 156 residues: Snaclec A2 (156 aa).

An N-terminal signal peptide occupies residues 1–23 (MGRLISVSFGLLVVFLSLSGTGA). Intrachain disulfides connect Cys-27–Cys-38, Cys-55–Cys-154, and Cys-129–Cys-146. Positions 34-155 (HEGHCYKVFN…CGQPYRFTCE (122 aa)) constitute a C-type lectin domain.

It belongs to the snaclec family. As to quaternary structure, heterodimer; disulfide-linked. In terms of tissue distribution, expressed by the venom gland.

The protein resides in the secreted. Interferes with one step of hemostasis (modulation of platelet aggregation, or coagulation cascade, for example). This is Snaclec A2 from Macrovipera lebetinus (Levantine viper).